The chain runs to 192 residues: Thymidylate kinase (192 aa).

7 to 14 serves as a coordination point for ATP; it reads GVDGVGKS.

This sequence belongs to the thymidylate kinase family.

It catalyses the reaction dTMP + ATP = dTDP + ADP. Functionally, phosphorylation of dTMP to form dTDP in both de novo and salvage pathways of dTTP synthesis. The polypeptide is Thymidylate kinase (Campylobacter fetus subsp. fetus (strain 82-40)).